We begin with the raw amino-acid sequence, 40 residues long: MADTTGRIPLWLIGTVTGIIVIGLIGIFFYGSYSGLGSSL.

The chain crosses the membrane as a helical span at residues 8–28 (IPLWLIGTVTGIIVIGLIGIF).

This sequence belongs to the PsbJ family. As to quaternary structure, PSII is composed of 1 copy each of membrane proteins PsbA, PsbB, PsbC, PsbD, PsbE, PsbF, PsbH, PsbI, PsbJ, PsbK, PsbL, PsbM, PsbT, PsbX, PsbY, PsbZ, Psb30/Ycf12, at least 3 peripheral proteins of the oxygen-evolving complex and a large number of cofactors. It forms dimeric complexes.

Its subcellular location is the plastid. It localises to the chloroplast thylakoid membrane. Its function is as follows. One of the components of the core complex of photosystem II (PSII). PSII is a light-driven water:plastoquinone oxidoreductase that uses light energy to abstract electrons from H(2)O, generating O(2) and a proton gradient subsequently used for ATP formation. It consists of a core antenna complex that captures photons, and an electron transfer chain that converts photonic excitation into a charge separation. The sequence is that of Photosystem II reaction center protein J from Piper cenocladum (Ant piper).